Here is a 409-residue protein sequence, read N- to C-terminus: Peptidase T (409 aa).

Position 78 (His-78) interacts with Zn(2+). The active site involves Asp-80. Asp-140 contacts Zn(2+). Glu-173 functions as the Proton acceptor in the catalytic mechanism. Residues Glu-174, Asp-196, and His-379 each contribute to the Zn(2+) site.

This sequence belongs to the peptidase M20B family. The cofactor is Zn(2+).

It is found in the cytoplasm. It catalyses the reaction Release of the N-terminal residue from a tripeptide.. Functionally, cleaves the N-terminal amino acid of tripeptides. The protein is Peptidase T of Salmonella paratyphi C (strain RKS4594).